Consider the following 129-residue polypeptide: Histone H2A-III (129 aa).

This sequence belongs to the histone H2A family. The nucleosome is a histone octamer containing two molecules each of H2A, H2B, H3 and H4 assembled in one H3-H4 heterotetramer and two H2A-H2B heterodimers. The octamer wraps approximately 147 bp of DNA.

The protein resides in the nucleus. Its subcellular location is the chromosome. Core component of nucleosome. Nucleosomes wrap and compact DNA into chromatin, limiting DNA accessibility to the cellular machineries which require DNA as a template. Histones thereby play a central role in transcription regulation, DNA repair, DNA replication and chromosomal stability. DNA accessibility is regulated via a complex set of post-translational modifications of histones, also called histone code, and nucleosome remodeling. This Volvox carteri (Green alga) protein is Histone H2A-III.